The primary structure comprises 515 residues: MAVPEPSMPLSRGGPGSASLSPPRGDRTLLVRHLPAELTAEEKEDLLKYFGAQSVRVLSDKGRLKHTAFATFPNEKAAIKALTRLHQLKLLGHTLVVEFAKEQDRVHSSCPASNAEKKKRLDDTVENDKEKKEPDVLTVENGIAPNHGLTFPLNSCLKYMYPPPSSTILANIVNALASVPKFYVQVLHLMNKMNLPTPFGPITARPPMYEDYVQLHAPLPPTSPQPPEEPPLPDEDEDLSSKESEYESSDEEDRQRMNKLMELANFQPKRPKTVKPRHVRKKRKIKDMLTVPSPASQSLHPVLLPSDVFDQPQPVGNKKIEFNISTNVPAALNKDLETEQNNEEKNSDSPDTGLDDSNTGFGKLFPKPNVNITEEIKEDSDEMPSQFISRRELEKGRISREEMETLSVFRSYEPGEPNCRIYVKNLARHVQEKDLKFIFGRYVDFSSETQRIMFDIRLMKEGRMKGQAFVGLPNEKAAAKALKEANGYVLFGKPMVVQFARSARPKHDSKEGKRK.

A disordered region spans residues 1–26 (MAVPEPSMPLSRGGPGSASLSPPRGD). Ser-21 carries the post-translational modification Phosphoserine. The RRM 1 domain occupies 27–102 (RTLLVRHLPA…HTLVVEFAKE (76 aa)). Disordered regions lie at residues 107–133 (HSSC…EKKE), 215–254 (LHAP…EEDR), and 337–369 (ETEQ…PKPN). Ser-108 is modified (phosphoserine). The segment covering 115–133 (AEKKKRLDDTVENDKEKKE) has biased composition (basic and acidic residues). Residues 218–230 (PLPPTSPQPPEEP) are compositionally biased toward pro residues. Basic and acidic residues predominate over residues 337 to 348 (ETEQNNEEKNSD). Ser-349 carries the post-translational modification Phosphoserine. Residues 419-502 (CRIYVKNLAR…KPMVVQFARS (84 aa)) form the RRM 2 domain.

As to quaternary structure, component of the U11/U12 snRNPs that are part of the U12-type spliceosome. Found in a complex with m(7)G-capped U12 snRNA. Interacts with PDCD7.

It is found in the nucleus. Participates in pre-mRNA U12-dependent splicing, performed by the minor spliceosome which removes U12-type introns. U12-type introns comprises less than 1% of all non-coding sequences. Binds to the 3'-stem-loop of m(7)G-capped U12 snRNA. This Rattus norvegicus (Rat) protein is RNA-binding region-containing protein 3 (Rnpc3).